Consider the following 406-residue polypeptide: Cholinephosphotransferase 1 (406 aa).

At Ala-2 the chain carries N-acetylalanine. Residues 2-62 are Cytoplasmic-facing; it reads AAGAGARPAP…LLQWIPLWMA (61 aa). The helical transmembrane segment at 63-83 threads the bilayer; it reads PNSITLLGLAINMLTTLVLIS. Asn-64 is a CDP-choline binding site. The Lumenal portion of the chain corresponds to 84 to 93; it reads YCPTVTEEAP. Residues 94-118 traverse the membrane as a helical segment; the sequence is YWTYLLCALGLFIYQSLDAIDGKQA. 2 residues coordinate Mg(2+): Asp-111 and Asp-114. Arg-119 lines the CDP-choline pocket. At 119 to 125 the chain is on the cytoplasmic side; the sequence is RRTNSCS. Residues 126-150 traverse the membrane as a helical segment; it reads PLGELFDHGCDSLSTVFMAVGASIA. Asp-132 provides a ligand contact to Mg(2+). His-133 acts as the Proton acceptor in catalysis. Position 136 (Asp-136) interacts with Mg(2+). At 151–160 the chain is on the lumenal side; that stretch reads VRLGTHPDWL. A helical membrane pass occupies residues 161 to 179; that stretch reads FFCSFIGMFMFYCAHWQTY. Residues 180-190 lie on the Cytoplasmic side of the membrane; it reads VSGVLRFGKVD. The helical transmembrane segment at 191–207 threads the bilayer; it reads VTEIQIALVIVFVLSTF. Over 208–222 the chain is Lumenal; it reads GGATMWDYTIPILEI. The helical transmembrane segment at 223–248 threads the bilayer; sequence KLKILPVLGVVGGAIFSCSNYFHVIL. Residues 249–265 lie on the Cytoplasmic side of the membrane; it reads HGGVGKNGSTIAGTSVL. Residues 266-281 form a helical membrane-spanning segment; that stretch reads SPGLHIGIIIILAIMI. The Lumenal segment spans residues 282-293; that stretch reads YKKSATNLFEKH. A helical transmembrane segment spans residues 294–316; the sequence is PCLYTLMFGCVFAKVSQKLVIAH. Residues 317–329 are Cytoplasmic-facing; it reads MTKSELYLQDTVF. Residues 330 to 339 form a helical membrane-spanning segment; it reads IGPGLLFLDQ. The Lumenal portion of the chain corresponds to 340 to 346; it reads YFNNFVD. Residues 347–376 traverse the membrane as a helical segment; the sequence is EYIVLWIAMVISSLDMMRYFSALCLQISRH. Residues 377 to 406 are Cytoplasmic-facing; that stretch reads LHLSIFKTSCHQAPEQVQVLPPKSHQNNMD.

It belongs to the CDP-alcohol phosphatidyltransferase class-I family. Mg(2+) is required as a cofactor. The cofactor is Mn(2+).

The protein localises to the golgi apparatus membrane. It catalyses the reaction CDP-choline + a 1,2-diacyl-sn-glycerol = a 1,2-diacyl-sn-glycero-3-phosphocholine + CMP + H(+). The enzyme catalyses 1-octadecanoyl-2-(5Z,8Z,11Z,14Z-eicosatetraenoyl)-sn-glycerol + CDP-choline = 1-octadecanoyl-2-(5Z,8Z,11Z,14Z-eicosatetraenoyl)-sn-glycero-3-phosphocholine + CMP + H(+). It carries out the reaction 1-hexadecanoyl-2-(9Z-octadecenoyl)-sn-glycerol + CDP-choline = 1-hexadecanoyl-2-(9Z-octadecenoyl)-sn-glycero-3-phosphocholine + CMP + H(+). The catalysed reaction is 1-hexadecanoyl-2-(4Z,7Z,10Z,13Z,16Z,19Z-docosahexaenoyl)-sn-glycerol + CDP-choline = 1-hexadecanoyl-2-(4Z,7Z,10Z,13Z,16Z,19Z-docosahexaenoyl)-sn-glycero-3-phosphocholine + CMP + H(+). It catalyses the reaction 1,2-dioctanoyl-sn-glycerol + CDP-choline = 1,2-dioctanoyl-sn-glycero-3-phosphocholine + CMP + H(+). It functions in the pathway phospholipid metabolism; phosphatidylcholine biosynthesis; phosphatidylcholine from phosphocholine: step 2/2. Functionally, catalyzes the final step of de novo phosphatidylcholine (PC) synthesis, i.e. the transfer of choline phosphate from CDP-choline to the free hydroxyl of a diacylglycerol (DAG), producing a PC. It thereby plays a central role in the formation and maintenance of vesicular membranes. This Bos taurus (Bovine) protein is Cholinephosphotransferase 1 (CHPT1).